Reading from the N-terminus, the 127-residue chain is Small ribosomal subunit protein uS12 (127 aa).

Aspartate 89 is subject to 3-methylthioaspartic acid.

Belongs to the universal ribosomal protein uS12 family. As to quaternary structure, part of the 30S ribosomal subunit. Contacts proteins S8 and S17. May interact with IF1 in the 30S initiation complex.

With S4 and S5 plays an important role in translational accuracy. Functionally, interacts with and stabilizes bases of the 16S rRNA that are involved in tRNA selection in the A site and with the mRNA backbone. Located at the interface of the 30S and 50S subunits, it traverses the body of the 30S subunit contacting proteins on the other side and probably holding the rRNA structure together. The combined cluster of proteins S8, S12 and S17 appears to hold together the shoulder and platform of the 30S subunit. The chain is Small ribosomal subunit protein uS12 from Nautilia profundicola (strain ATCC BAA-1463 / DSM 18972 / AmH).